A 60-amino-acid polypeptide reads, in one-letter code: Large ribosomal subunit protein uL30 (60 aa).

The protein belongs to the universal ribosomal protein uL30 family. Part of the 50S ribosomal subunit.

This chain is Large ribosomal subunit protein uL30, found in Acidothermus cellulolyticus (strain ATCC 43068 / DSM 8971 / 11B).